The sequence spans 370 residues: MTNANVDATQLTTKPSQDGFYMPAEWAAQQAVWMIWPYRPDNWRSAGAYAQATFAKVADAIGGATPVYMGVPQAFLAEAQKVMPSHVTLVEIDSNDCWARDTGPTVVVNAEGECRGVDWGFNAWGGHNGGLYFPWDKDEQVAAQMLKQHGFARYSAPLILEGGSIHVDGEGTCMTTAECLLNANRNPDLTKEQIEALLRDYLNVKQFIWLEEGVYMDETDGHIDNMCCFARPGEVVLHWTDDETDPQYPRSKAALDVLQNTVDAQGRKLKIHLLPQPGPLYCTEEESKGVTEGTGVPRTAGERLAGSYVNFLITNDRIVFPLLDPATDDIAAQKLQDIFPEHKIVGVPAREILLGGGNIHCITQQIPSGK.

The active-site Amidino-cysteine intermediate is cysteine 361.

Belongs to the agmatine deiminase family.

It catalyses the reaction agmatine + H2O = N-carbamoylputrescine + NH4(+). The protein is Putative agmatine deiminase of Shewanella sp. (strain MR-7).